We begin with the raw amino-acid sequence, 315 residues long: Homoserine kinase (315 aa).

Residue 91–101 (PIGSGLGSSAS) participates in ATP binding.

Belongs to the GHMP kinase family. Homoserine kinase subfamily.

The protein localises to the cytoplasm. The catalysed reaction is L-homoserine + ATP = O-phospho-L-homoserine + ADP + H(+). Its pathway is amino-acid biosynthesis; L-threonine biosynthesis; L-threonine from L-aspartate: step 4/5. In terms of biological role, catalyzes the ATP-dependent phosphorylation of L-homoserine to L-homoserine phosphate. This Buchnera aphidicola subsp. Cinara cedri (strain Cc) protein is Homoserine kinase.